Reading from the N-terminus, the 268-residue chain is uncharacterized protein (268 aa).

It belongs to the LarE family.

This is an uncharacterized protein from Synechocystis sp. (strain ATCC 27184 / PCC 6803 / Kazusa).